The sequence spans 314 residues: Formimidoylglutamase (314 aa).

Residues histidine 127, aspartate 153, histidine 155, aspartate 157, aspartate 245, and aspartate 247 each contribute to the Mn(2+) site.

It belongs to the arginase family. Requires Mn(2+) as cofactor.

It catalyses the reaction N-formimidoyl-L-glutamate + H2O = formamide + L-glutamate. Its pathway is amino-acid degradation; L-histidine degradation into L-glutamate; L-glutamate from N-formimidoyl-L-glutamate (hydrolase route): step 1/1. In terms of biological role, catalyzes the conversion of N-formimidoyl-L-glutamate to L-glutamate and formamide. This is Formimidoylglutamase from Aeromonas hydrophila subsp. hydrophila (strain ATCC 7966 / DSM 30187 / BCRC 13018 / CCUG 14551 / JCM 1027 / KCTC 2358 / NCIMB 9240 / NCTC 8049).